We begin with the raw amino-acid sequence, 349 residues long: D-arabinose 1-dehydrogenase (NADP(+)) (349 aa).

Cysteine 46, histidine 70, aspartate 99, cysteine 102, cysteine 105, cysteine 113, and aspartate 155 together coordinate Zn(2+).

It belongs to the zinc-containing alcohol dehydrogenase family. In terms of assembly, homotetramer. Dimer of dimers. Requires Zn(2+) as cofactor.

The catalysed reaction is D-arabinose + NADP(+) = D-arabinono-1,4-lactone + NADPH + H(+). Functionally, participates in a pentose oxidation pathway that converts D-arabinose to 2-oxoglutarate. Catalyzes the NADP-dependent conversion of D-arabinose to D-arabinono-1,4-lactone. In vitro, can also use L-fucose, L-galactose and D-ribose. Shows highest activity with L-fucose, in combinaison with NAD, and lower activity toward L-galactose and D-ribose. When acting on its physiological substrate, D-arabinose, shows a clear preference for NADP over NAD. This chain is D-arabinose 1-dehydrogenase (NADP(+)), found in Saccharolobus solfataricus (strain ATCC 35092 / DSM 1617 / JCM 11322 / P2) (Sulfolobus solfataricus).